A 528-amino-acid polypeptide reads, in one-letter code: Galactokinase (528 aa).

4 residues coordinate alpha-D-galactose: Arg-53, Glu-59, His-60, and Asp-62. 4 residues coordinate ATP: Gly-165, Gly-167, Ser-169, and Ser-170. Residues Asn-213 and Asp-217 each coordinate alpha-D-galactose. Asp-217 functions as the Proton acceptor in the catalytic mechanism. ATP is bound by residues Ser-264, Asn-265, and Lys-266. Alpha-D-galactose is bound at residue Tyr-274. Ser-381 bears the Phosphoserine mark.

It belongs to the GHMP kinase family. GalK subfamily.

It catalyses the reaction alpha-D-galactose + ATP = alpha-D-galactose 1-phosphate + ADP + H(+). Its pathway is carbohydrate metabolism; galactose metabolism. In terms of biological role, galactokinase is a key enzyme in the galactose metabolism where it catalyzes the conversion of alpha-D-galactose to galactose 1-phosphate. Can also induce the transcription of the yeast GAL genes in response to the organism being challenged with galactose as the sole source of carbon. It's striking amino acid sequence similarity to GAL3 might explain its GAL3-like induction activity. The protein is Galactokinase of Saccharomyces cerevisiae (strain ATCC 204508 / S288c) (Baker's yeast).